We begin with the raw amino-acid sequence, 215 residues long: Ras-related protein Rab-5B (215 aa).

GTP contacts are provided by serine 29, alanine 30, glycine 32, lysine 33, serine 34, serine 35, histidine 46, glutamate 47, threonine 52, glycine 78, asparagine 133, lysine 134, aspartate 136, alanine 164, and lysine 165. A Mg(2+)-binding site is contributed by serine 34. Short sequence motifs (switch) lie at residues 44-56 (QFHE…IGAA) and 77-93 (AGQE…YRGA). A Mg(2+)-binding site is contributed by threonine 52. The interval 184–215 (SEPQSTSGAAGRSRGVDLHEQTQQNKSQCCSN) is disordered. A compositionally biased stretch (polar residues) spans 204-215 (QTQQNKSQCCSN). 2 S-geranylgeranyl cysteine lipidation sites follow: cysteine 212 and cysteine 213.

The protein belongs to the small GTPase superfamily. Rab family. Mg(2+) serves as cofactor.

The protein localises to the cell membrane. The protein resides in the early endosome membrane. It carries out the reaction GTP + H2O = GDP + phosphate + H(+). With respect to regulation, regulated by guanine nucleotide exchange factors (GEFs) which promote the exchange of bound GDP for free GTP. Regulated by GTPase activating proteins (GAPs) which increase the GTP hydrolysis activity. Inhibited by GDP dissociation inhibitors (GDIs). In terms of biological role, the small GTPases Rab are key regulators of intracellular membrane trafficking, from the formation of transport vesicles to their fusion with membranes. Rabs cycle between an inactive GDP-bound form and an active GTP-bound form that is able to recruit to membranes different sets of downstream effectors directly responsible for vesicle formation, movement, tethering and fusion. The chain is Ras-related protein Rab-5B (RAB5B) from Gallus gallus (Chicken).